Consider the following 483-residue polypeptide: Acetyl-coenzyme A carboxylase carboxyl transferase subunit beta, chloroplastic (483 aa).

A CoA carboxyltransferase N-terminal domain is found at 219–483; that stretch reads LWVQCENCYG…LHTFFPLNQN (265 aa). C223, C226, C242, and C245 together coordinate Zn(2+). A C4-type zinc finger spans residues 223-245; that stretch reads CENCYGLNYKKFFKSKMNLCEQC.

This sequence belongs to the AccD/PCCB family. In terms of assembly, acetyl-CoA carboxylase is a heterohexamer composed of biotin carboxyl carrier protein, biotin carboxylase and 2 subunits each of ACCase subunit alpha and ACCase plastid-coded subunit beta (accD). Zn(2+) serves as cofactor.

It is found in the plastid. The protein resides in the chloroplast stroma. The catalysed reaction is N(6)-carboxybiotinyl-L-lysyl-[protein] + acetyl-CoA = N(6)-biotinyl-L-lysyl-[protein] + malonyl-CoA. It functions in the pathway lipid metabolism; malonyl-CoA biosynthesis; malonyl-CoA from acetyl-CoA: step 1/1. Functionally, component of the acetyl coenzyme A carboxylase (ACC) complex. Biotin carboxylase (BC) catalyzes the carboxylation of biotin on its carrier protein (BCCP) and then the CO(2) group is transferred by the transcarboxylase to acetyl-CoA to form malonyl-CoA. The sequence is that of Acetyl-coenzyme A carboxylase carboxyl transferase subunit beta, chloroplastic from Guizotia abyssinica (Niger).